The following is a 335-amino-acid chain: Adenosine deaminase (335 aa).

The Zn(2+) site is built by H12 and H14. Substrate-binding residues include H14 and D16. H197 provides a ligand contact to Zn(2+). E200 (proton donor) is an active-site residue. D278 is a Zn(2+) binding site.

Belongs to the metallo-dependent hydrolases superfamily. Adenosine and AMP deaminases family. Adenosine deaminase subfamily. It depends on Zn(2+) as a cofactor.

It catalyses the reaction adenosine + H2O + H(+) = inosine + NH4(+). It carries out the reaction 2'-deoxyadenosine + H2O + H(+) = 2'-deoxyinosine + NH4(+). Catalyzes the hydrolytic deamination of adenosine and 2-deoxyadenosine. This is Adenosine deaminase from Clostridium botulinum (strain Langeland / NCTC 10281 / Type F).